An 883-amino-acid chain; its full sequence is Phosphoenolpyruvate carboxylase (883 aa).

Residues His-138 and Lys-546 contribute to the active site.

Belongs to the PEPCase type 1 family. Mg(2+) is required as a cofactor.

The enzyme catalyses oxaloacetate + phosphate = phosphoenolpyruvate + hydrogencarbonate. Functionally, forms oxaloacetate, a four-carbon dicarboxylic acid source for the tricarboxylic acid cycle. The polypeptide is Phosphoenolpyruvate carboxylase (Erwinia tasmaniensis (strain DSM 17950 / CFBP 7177 / CIP 109463 / NCPPB 4357 / Et1/99)).